The chain runs to 131 residues: Fumarate reductase subunit C (131 aa).

Helical transmembrane passes span 30-50 (EGTAVPAVWFSIELIFALFAL), 57-77 (WAGFVDFLQNPVIVIINLITL), and 109-129 (IIKSLWAVTVVATIVILFVAL).

Belongs to the FrdC family. As to quaternary structure, part of an enzyme complex containing four subunits: a flavoprotein (FrdA), an iron-sulfur protein (FrdB), and two hydrophobic anchor proteins (FrdC and FrdD).

Its subcellular location is the cell inner membrane. Two distinct, membrane-bound, FAD-containing enzymes are responsible for the catalysis of fumarate and succinate interconversion; fumarate reductase is used in anaerobic growth, and succinate dehydrogenase is used in aerobic growth. Anchors the catalytic components of the fumarate reductase complex to the cell inner membrane, binds quinones. The protein is Fumarate reductase subunit C of Shigella flexneri.